The following is a 370-amino-acid chain: D-aspartate oxidase (370 aa).

8 residues coordinate FAD: Ile-15, Ala-49, Ser-50, Gly-54, Val-166, Arg-317, Gly-346, and Gln-348. The Microbody targeting signal motif lies at Ala-368–Leu-370.

This sequence belongs to the DAMOX/DASOX family. As to quaternary structure, homotetramer. It depends on FAD as a cofactor.

The protein resides in the peroxisome matrix. It carries out the reaction D-aspartate + O2 + H2O = oxaloacetate + H2O2 + NH4(+). The catalysed reaction is D-glutamate + O2 + H2O = H2O2 + 2-oxoglutarate + NH4(+). With respect to regulation, inhibited by malonate and D-malate. Very mildly inhibited by benzoate, ethylenediaminetetraacetic acid (EDTA), crotonate and anthranilate. May be very mildly inhibited by meso-tartrate. Selectively catalyzes the oxidative deamination of acidic amino acids. Protects the organism from the toxicity of D-amino acids. Enables the organism to utilize D-amino acids as a source of nutrients. Enables the organism to utilize D-aspartate as a source of nitrogen and carbon. This Vanrija humicola (Yeast) protein is D-aspartate oxidase.